The sequence spans 476 residues: Aspartyl/glutamyl-tRNA(Asn/Gln) amidotransferase subunit B (476 aa).

The protein belongs to the GatB/GatE family. GatB subfamily. In terms of assembly, heterotrimer of A, B and C subunits.

The catalysed reaction is L-glutamyl-tRNA(Gln) + L-glutamine + ATP + H2O = L-glutaminyl-tRNA(Gln) + L-glutamate + ADP + phosphate + H(+). It carries out the reaction L-aspartyl-tRNA(Asn) + L-glutamine + ATP + H2O = L-asparaginyl-tRNA(Asn) + L-glutamate + ADP + phosphate + 2 H(+). Its function is as follows. Allows the formation of correctly charged Asn-tRNA(Asn) or Gln-tRNA(Gln) through the transamidation of misacylated Asp-tRNA(Asn) or Glu-tRNA(Gln) in organisms which lack either or both of asparaginyl-tRNA or glutaminyl-tRNA synthetases. The reaction takes place in the presence of glutamine and ATP through an activated phospho-Asp-tRNA(Asn) or phospho-Glu-tRNA(Gln). The protein is Aspartyl/glutamyl-tRNA(Asn/Gln) amidotransferase subunit B of Clostridium botulinum (strain Kyoto / Type A2).